Here is a 65-residue protein sequence, read N- to C-terminus: Large ribosomal subunit protein bL35 (65 aa).

The protein belongs to the bacterial ribosomal protein bL35 family.

This Rhodospirillum rubrum (strain ATCC 11170 / ATH 1.1.1 / DSM 467 / LMG 4362 / NCIMB 8255 / S1) protein is Large ribosomal subunit protein bL35.